Consider the following 726-residue polypeptide: Catalase-peroxidase (726 aa).

The N-terminal stretch at M1–G16 is a signal peptide. Residues M1–D26 form a disordered region. The segment at residues W96 to Y218 is a cross-link (tryptophyl-tyrosyl-methioninium (Trp-Tyr) (with M-244)). H97 serves as the catalytic Proton acceptor. The tryptophyl-tyrosyl-methioninium (Tyr-Met) (with W-96) cross-link spans Y218 to M244. H259 lines the heme b pocket.

This sequence belongs to the peroxidase family. Peroxidase/catalase subfamily. Homodimer or homotetramer. Requires heme b as cofactor. Post-translationally, formation of the three residue Trp-Tyr-Met cross-link is important for the catalase, but not the peroxidase activity of the enzyme.

The enzyme catalyses H2O2 + AH2 = A + 2 H2O. It catalyses the reaction 2 H2O2 = O2 + 2 H2O. Bifunctional enzyme with both catalase and broad-spectrum peroxidase activity. The sequence is that of Catalase-peroxidase from Rhizobium johnstonii (strain DSM 114642 / LMG 32736 / 3841) (Rhizobium leguminosarum bv. viciae).